Consider the following 136-residue polypeptide: Large ribosomal subunit protein uL16 (136 aa).

Belongs to the universal ribosomal protein uL16 family. In terms of assembly, part of the 50S ribosomal subunit.

Its function is as follows. Binds 23S rRNA and is also seen to make contacts with the A and possibly P site tRNAs. This is Large ribosomal subunit protein uL16 from Buchnera aphidicola subsp. Baizongia pistaciae (strain Bp).